The chain runs to 384 residues: tRNA-specific 2-thiouridylase MnmA (384 aa).

ATP is bound by residues 30-37 and Met-56; that span reads GMSGGVDS. Positions 116 to 118 are interaction with target base in tRNA; that stretch reads NPD. The active-site Nucleophile is the Cys-121. Residues Cys-121 and Cys-218 are joined by a disulfide bond. ATP is bound at residue Gly-146. The tract at residues 168-170 is interaction with tRNA; the sequence is KDQ. Cys-218 (cysteine persulfide intermediate) is an active-site residue. An interaction with tRNA region spans residues 330 to 331; sequence RY.

Belongs to the MnmA/TRMU family.

The protein localises to the cytoplasm. The enzyme catalyses S-sulfanyl-L-cysteinyl-[protein] + uridine(34) in tRNA + AH2 + ATP = 2-thiouridine(34) in tRNA + L-cysteinyl-[protein] + A + AMP + diphosphate + H(+). Its function is as follows. Catalyzes the 2-thiolation of uridine at the wobble position (U34) of tRNA, leading to the formation of s(2)U34. This chain is tRNA-specific 2-thiouridylase MnmA, found in Haemophilus ducreyi (strain 35000HP / ATCC 700724).